An 87-amino-acid polypeptide reads, in one-letter code: Putative protein KleG (87 aa).

Disordered regions lie at residues 1-23 (MRHS…WPSS) and 61-87 (IPTT…IFSR). Residues 68 to 78 (RGRRPQRHRPS) show a composition bias toward basic residues.

This is Putative protein KleG (kleG) from Escherichia coli.